A 466-amino-acid polypeptide reads, in one-letter code: tRNA-2-methylthio-N(6)-dimethylallyladenosine synthase (466 aa).

Residues 21-137 form the MTTase N-terminal domain; sequence GSYWITTFGC…LEDLLNQVDN (117 aa). [4Fe-4S] cluster contacts are provided by C30, C66, C100, C172, C176, and C179. The Radical SAM core domain maps to 158–395; it reads RDSNICAWVN…NLLVEQTAKD (238 aa). Residues 398–466 enclose the TRAM domain; the sequence is TRYHNQIVEV…AFSLTGSPIQ (69 aa).

The protein belongs to the methylthiotransferase family. MiaB subfamily. As to quaternary structure, monomer. [4Fe-4S] cluster is required as a cofactor.

It localises to the cytoplasm. It catalyses the reaction N(6)-dimethylallyladenosine(37) in tRNA + (sulfur carrier)-SH + AH2 + 2 S-adenosyl-L-methionine = 2-methylsulfanyl-N(6)-dimethylallyladenosine(37) in tRNA + (sulfur carrier)-H + 5'-deoxyadenosine + L-methionine + A + S-adenosyl-L-homocysteine + 2 H(+). Functionally, catalyzes the methylthiolation of N6-(dimethylallyl)adenosine (i(6)A), leading to the formation of 2-methylthio-N6-(dimethylallyl)adenosine (ms(2)i(6)A) at position 37 in tRNAs that read codons beginning with uridine. The chain is tRNA-2-methylthio-N(6)-dimethylallyladenosine synthase from Prochlorococcus marinus (strain SARG / CCMP1375 / SS120).